The following is a 324-amino-acid chain: Polyprenol dehydrogenase (324 aa).

Tyr206 acts as the Proton acceptor in catalysis. Positions 206, 210, and 243 each coordinate NAD(+).

It belongs to the short-chain dehydrogenases/reductases (SDR) family.

It localises to the lipid droplet. The enzyme catalyses a di-trans,poly-cis-polyprenol + NAD(+) = a di-trans,poly-cis-polyprenal + NADH + H(+). The catalysed reaction is a di-trans,poly-cis-polyprenol + NADP(+) = a di-trans,poly-cis-polyprenal + NADPH + H(+). It carries out the reaction a di-trans,poly-cis-dolichol + NADP(+) = a di-trans,poly-cis-dolichal + NADPH + H(+). It catalyses the reaction a di-trans,poly-cis-dolichol + NAD(+) = a di-trans,poly-cis-dolichal + NADH + H(+). The protein operates within protein modification; protein glycosylation. Its function is as follows. Oxidoreductase that plays a key role in early steps of protein N-linked glycosylation by mediating two non-consecutive steps in dolichol biosynthesis. Acts both as a NAD(+)-dependent dehydrogenase and as a NADPH-dependent reductase during the conversion of polyprenol into dolichol. First catalyzes the NAD(+)-dependent dehydrogenation of polyprenol into polyprenal; polyprenal is then reduced into dolichal by srd5a3. It then catalyzes the NADPH-dependent reduction of dolichal into dolichol. The sequence is that of Polyprenol dehydrogenase from Danio rerio (Zebrafish).